Reading from the N-terminus, the 489-residue chain is Oxysterol-binding protein-related protein 1B (489 aa).

It belongs to the OSBP family. In terms of tissue distribution, expressed at low levels in flowers.

May be involved in the transport of sterols. The polypeptide is Oxysterol-binding protein-related protein 1B (ORP1B) (Arabidopsis thaliana (Mouse-ear cress)).